Here is a 70-residue protein sequence, read N- to C-terminus: Protein SlyX homolog (70 aa).

This sequence belongs to the SlyX family.

The protein is Protein SlyX homolog of Shewanella denitrificans (strain OS217 / ATCC BAA-1090 / DSM 15013).